The following is a 228-amino-acid chain: UPF0173 metal-dependent hydrolase Lm4b_01588 (228 aa).

The protein belongs to the UPF0173 family.

The sequence is that of UPF0173 metal-dependent hydrolase Lm4b_01588 from Listeria monocytogenes serotype 4b (strain CLIP80459).